Reading from the N-terminus, the 339-residue chain is Adenylosuccinate synthetase (339 aa).

GTP is bound by residues 12 to 18 (GDEGKGS) and 42 to 44 (GHS). Catalysis depends on D13, which acts as the Proton acceptor. Residues D13 and G42 each contribute to the Mg(2+) site. IMP contacts are provided by residues 13-16 (DEGK), 40-43 (NAGH), T127, R141, Q179, T194, and R256. The Proton donor role is filled by H43. 252–258 (TVTGRRR) lines the substrate pocket. GTP contacts are provided by residues R258, 284-286 (MLD), and 324-326 (KTG).

The protein belongs to the adenylosuccinate synthetase family. In terms of assembly, homodimer. The cofactor is Mg(2+).

It localises to the cytoplasm. It carries out the reaction IMP + L-aspartate + GTP = N(6)-(1,2-dicarboxyethyl)-AMP + GDP + phosphate + 2 H(+). It participates in purine metabolism; AMP biosynthesis via de novo pathway; AMP from IMP: step 1/2. Its function is as follows. Plays an important role in the de novo pathway of purine nucleotide biosynthesis. Catalyzes the first committed step in the biosynthesis of AMP from IMP. The sequence is that of Adenylosuccinate synthetase from Pyrococcus sp. (strain ST700).